A 356-amino-acid chain; its full sequence is Torsin-like protein (356 aa).

Residues 1–18 (MKLDYVLLLLFHLCFVNT) form the signal peptide. 110 to 117 (GYTGSGKN) contacts ATP. 2 N-linked (GlcNAc...) asparagine glycosylation sites follow: Asn125 and Asn250.

The protein belongs to the ClpA/ClpB family. Torsin subfamily.

The protein resides in the endoplasmic reticulum lumen. Functionally, may serve as a molecular chaperone assisting in the proper folding of secreted and/or membrane proteins. In Caenorhabditis elegans, this protein is Torsin-like protein (ooc-5).